Consider the following 435-residue polypeptide: Sex peptide receptor (435 aa).

Residues 1–93 (MDNYTDVLYQ…PLEYAMPLYG (93 aa)) are Extracellular-facing. The chain crosses the membrane as a helical span at residues 94–114 (YCMPFLLIITIISNSLIVLVL). Residues 115–124 (SKKSMATPTN) lie on the Cytoplasmic side of the membrane. Residues 125–145 (FVLMGMAICDMLTVIFPAPGL) form a helical membrane-spanning segment. Topologically, residues 146 to 168 (WYMYTFGNHYKPLHPVSMCLAYS) are extracellular. The chain crosses the membrane as a helical span at residues 169–189 (IFNEIMPAMCHTISVWLTLAL). Residues 190 to 211 (AVQRYIYVCHAPMARTWCTMPR) lie on the Cytoplasmic side of the membrane. Residues 212–229 (VRRCTAYIALLAFLHQLP) form a helical membrane-spanning segment. Topologically, residues 230 to 276 (RFFDRTYMPLVIEWNGSPTEVCHLETSMWVHDYIGVDLYYTSYYLFR) are extracellular. A helical transmembrane segment spans residues 277–297 (VLFVHLLPCIILVTLNILLFA). Topologically, residues 298–327 (AMRQAQERRKLLFRENRKKECKKLRETNCT) are cytoplasmic. The helical transmembrane segment at 328 to 348 (TLMLIVVVSVFLLAEIPIAVV) threads the bilayer. The Extracellular portion of the chain corresponds to 349–368 (TAMHIVSSLIIEFLDYGLAN). A helical membrane pass occupies residues 369 to 389 (ICIMLTNFFLVFSYPINFGIY). Over 390–435 (CGMSRQFRETFKEIFLGRLMAKKDSSTKYSIVNGARTCTNTNETVL) the chain is Cytoplasmic.

Belongs to the G-protein coupled receptor 1 family. In the female, expressed in the reproductive organs; strongly expressed in the spermathecae and the lower oviduct. No expression in the male reproductive organs. In the central nervous system of both sexes, it is expressed in the brain and ventral nerve cord (VNC); strongly expressed in the ventral regions of the suboesophageal ganglion, the cervical connective and in many nerve roots of the brain and VNC. Expressed in the s-LNvs and l-LNvs pdf neurons (at protein level).

The protein resides in the cell membrane. Its function is as follows. Receptor for two functionally unrelated ligands; SP (A70A) for controlling reproductive behaviors and MIP for controlling sleep behavior. MIP-SPR pathway functions as a sleep homeostat which perceives the need for sleep and stabilizes it by providing a slow-acting inhibitory input to the fly arousal system that involve the pigment dispersing factor (pdf) neurons. SP-SPR is one of the multiple SP pathways that induce female post-mating behavioral responses (PMR) such as the suppression of mating receptivity and initiation of egg laying. The PMR switch is achieved by mediating the synaptic output of neurons such as those expressing fruitless (fru), double sex (dsx) and pickpocket (ppk). The chain is Sex peptide receptor from Drosophila melanogaster (Fruit fly).